The following is a 58-amino-acid chain: Cyclotide trypsin inhibitor TopI1 (58 aa).

A signal peptide spans 1–23 (MKFIIVLLLLTALTLTSIPVIEG). The segment at residues 24–55 (ILKRCKTYDDCKDVCKARKGKCEFGICKCMIK) is a cross-link (cyclopeptide (Ile-Lys)). Intrachain disulfides connect cysteine 28–cysteine 45, cysteine 34–cysteine 50, and cysteine 38–cysteine 52. Serine 56 is subject to Serine amide.

In terms of processing, this is a cyclic peptide. Expressed by the venom gland.

It is found in the secreted. Its function is as follows. First cyclic scorpion trypsin inhibitor (Kd~0.5 nM). Does not inhibit chymotrypsin. This is Cyclotide trypsin inhibitor TopI1 from Tityus obscurus (Amazonian scorpion).